Here is a 360-residue protein sequence, read N- to C-terminus: UDP-N-acetylglucosamine--N-acetylmuramyl-(pentapeptide) pyrophosphoryl-undecaprenol N-acetylglucosamine transferase (360 aa).

UDP-N-acetyl-alpha-D-glucosamine-binding positions include 11–13 (TGG), Asn-117, Arg-160, Ser-192, and Gln-294.

This sequence belongs to the glycosyltransferase 28 family. MurG subfamily.

It is found in the cell inner membrane. The catalysed reaction is di-trans,octa-cis-undecaprenyl diphospho-N-acetyl-alpha-D-muramoyl-L-alanyl-D-glutamyl-meso-2,6-diaminopimeloyl-D-alanyl-D-alanine + UDP-N-acetyl-alpha-D-glucosamine = di-trans,octa-cis-undecaprenyl diphospho-[N-acetyl-alpha-D-glucosaminyl-(1-&gt;4)]-N-acetyl-alpha-D-muramoyl-L-alanyl-D-glutamyl-meso-2,6-diaminopimeloyl-D-alanyl-D-alanine + UDP + H(+). It functions in the pathway cell wall biogenesis; peptidoglycan biosynthesis. Functionally, cell wall formation. Catalyzes the transfer of a GlcNAc subunit on undecaprenyl-pyrophosphoryl-MurNAc-pentapeptide (lipid intermediate I) to form undecaprenyl-pyrophosphoryl-MurNAc-(pentapeptide)GlcNAc (lipid intermediate II). The chain is UDP-N-acetylglucosamine--N-acetylmuramyl-(pentapeptide) pyrophosphoryl-undecaprenol N-acetylglucosamine transferase from Rickettsia felis (strain ATCC VR-1525 / URRWXCal2) (Rickettsia azadi).